A 160-amino-acid polypeptide reads, in one-letter code: Cyclic pyranopterin monophosphate synthase (160 aa).

Substrate contacts are provided by residues 76–78 (LCH) and 114–115 (ME). The active site involves aspartate 129.

This sequence belongs to the MoaC family. In terms of assembly, homohexamer; trimer of dimers.

It carries out the reaction (8S)-3',8-cyclo-7,8-dihydroguanosine 5'-triphosphate = cyclic pyranopterin phosphate + diphosphate. It functions in the pathway cofactor biosynthesis; molybdopterin biosynthesis. Catalyzes the conversion of (8S)-3',8-cyclo-7,8-dihydroguanosine 5'-triphosphate to cyclic pyranopterin monophosphate (cPMP). This is Cyclic pyranopterin monophosphate synthase from Saccharophagus degradans (strain 2-40 / ATCC 43961 / DSM 17024).